We begin with the raw amino-acid sequence, 129 residues long: MTYLFVAAGGALGSTLRYWLSGLIAGAIGQSFPWGTLVINISGSIVIGAFATLTGPDGRVFIPGDWRQFFMVGVCGGYTTFSSFSLQTLTLAQEGQGLWAAANVVLSVVFCLIGVWLGHVGAVLINEGV.

4 helical membrane passes run 4 to 24 (LFVAAGGALGSTLRYWLSGLI), 32 to 52 (FPWGTLVINISGSIVIGAFAT), 69 to 89 (FFMVGVCGGYTTFSSFSLQTL), and 105 to 125 (VLSVVFCLIGVWLGHVGAVLI). Na(+) contacts are provided by G76 and T79.

The protein belongs to the fluoride channel Fluc/FEX (TC 1.A.43) family.

Its subcellular location is the cell inner membrane. The enzyme catalyses fluoride(in) = fluoride(out). With respect to regulation, na(+) is not transported, but it plays an essential structural role and its presence is essential for fluoride channel function. In terms of biological role, fluoride-specific ion channel. Important for reducing fluoride concentration in the cell, thus reducing its toxicity. The protein is Fluoride-specific ion channel FluC of Rhodospirillum rubrum (strain ATCC 11170 / ATH 1.1.1 / DSM 467 / LMG 4362 / NCIMB 8255 / S1).